Reading from the N-terminus, the 316-residue chain is Pantothenate kinase (316 aa).

95 to 102 serves as a coordination point for ATP; the sequence is GSVAVGKS.

This sequence belongs to the prokaryotic pantothenate kinase family.

It localises to the cytoplasm. It catalyses the reaction (R)-pantothenate + ATP = (R)-4'-phosphopantothenate + ADP + H(+). Its pathway is cofactor biosynthesis; coenzyme A biosynthesis; CoA from (R)-pantothenate: step 1/5. The polypeptide is Pantothenate kinase (Photorhabdus laumondii subsp. laumondii (strain DSM 15139 / CIP 105565 / TT01) (Photorhabdus luminescens subsp. laumondii)).